The following is a 145-amino-acid chain: Putative pre-16S rRNA nuclease (145 aa).

The protein belongs to the YqgF nuclease family.

It is found in the cytoplasm. Functionally, could be a nuclease involved in processing of the 5'-end of pre-16S rRNA. The sequence is that of Putative pre-16S rRNA nuclease from Levilactobacillus brevis (strain ATCC 367 / BCRC 12310 / CIP 105137 / JCM 1170 / LMG 11437 / NCIMB 947 / NCTC 947) (Lactobacillus brevis).